The sequence spans 207 residues: Small ribosomal subunit protein uS4 (207 aa).

A disordered region spans residues 31–51; sequence KCKLDSKPGQHGRTSGARTSD. The S4 RNA-binding domain occupies 97–162; the sequence is SRLDNVVYRM…QGRIRESLDL (66 aa).

The protein belongs to the universal ribosomal protein uS4 family. In terms of assembly, part of the 30S ribosomal subunit. Contacts protein S5. The interaction surface between S4 and S5 is involved in control of translational fidelity.

Functionally, one of the primary rRNA binding proteins, it binds directly to 16S rRNA where it nucleates assembly of the body of the 30S subunit. With S5 and S12 plays an important role in translational accuracy. In Bordetella bronchiseptica (strain ATCC BAA-588 / NCTC 13252 / RB50) (Alcaligenes bronchisepticus), this protein is Small ribosomal subunit protein uS4.